The primary structure comprises 229 residues: Orotidine 5'-phosphate decarboxylase (229 aa).

Substrate-binding positions include Asp-10, Lys-32, 59–68 (DLKFHDIPNT), Thr-119, Arg-180, Gln-189, Gly-209, and Arg-210. The active-site Proton donor is the Lys-61.

Belongs to the OMP decarboxylase family. Type 1 subfamily. In terms of assembly, homodimer.

It catalyses the reaction orotidine 5'-phosphate + H(+) = UMP + CO2. The protein operates within pyrimidine metabolism; UMP biosynthesis via de novo pathway; UMP from orotate: step 2/2. Its function is as follows. Catalyzes the decarboxylation of orotidine 5'-monophosphate (OMP) to uridine 5'-monophosphate (UMP). This is Orotidine 5'-phosphate decarboxylase from Legionella pneumophila (strain Lens).